The sequence spans 101 residues: Small ribosomal subunit protein uS14 (101 aa).

This sequence belongs to the universal ribosomal protein uS14 family. In terms of assembly, part of the 30S ribosomal subunit. Contacts proteins S3 and S10.

Its function is as follows. Binds 16S rRNA, required for the assembly of 30S particles and may also be responsible for determining the conformation of the 16S rRNA at the A site. This Brucella abortus (strain S19) protein is Small ribosomal subunit protein uS14.